An 882-amino-acid polypeptide reads, in one-letter code: MELDDFNSRILSQIFDKSWKVRFEAYESLLHALNRALDDSDVCFQPWIHDPALWKQGLCDSNVPTQEHAVKSLRCFLDKSRQKGVNSAKSFVVAPLLEKCLPSPRQSIRDASHQALLILAKSDALDYVLEGLFSAARVKHPKQAVASIKELNSLLENFGIPALSPIPFYKLIPTLFAQSDKNIRQEASNLSITLYAWVGNAFKTHVFPQLKQIQVSDLEASFQNVTSRTTTGGHISNSLNTQEVVLPSFSSNAKPKPHLSSKSSSQGNTLQRSTSSFSTPNRKVSQPSDFSASPSRSIVSPAKNIVGSTPVDVLSKLTPEFHTALSSPKWKDRKEALESMVPVCSNPVYQEGDYSELLRVIAKSLKDANVVVVGVAALLLTHIAKALRKGFLPYTGIVLPSLFDRFKERKSSLVHSLLDAANAIFESCGLNDIMDETLEFLKHKNPQVKTETLRWLNRCLQLTDVCPPRASLETLCSLCVTLINDTFEPVRMATTNVLATLVQIFSQPVLSKYIVGLDPKKLPKILELSKDITVNAHPNQPSRPRLPRVASPLKTSPVKLAVTPQAPSPLPSSNPSQASLTEESLSTRSSPTKPSTTSLRSQSLVNRFASSTLKAPSSSSKGVSNAASSKQSFPSSPSISKKLETSRLSTKKLPGSTMKAASALKEYPQQQSMKSGGEKQDNLVTITMSEKVELDLLREEKAIRQVQEAEDALERERLFREINDLQIQNAEMKEQVYEKESTISQKEVEITSLRNEKDRLSTRLQQVLLELEKQHETNEEAMDIDLKVPESGAIGRVTTRATATTAMDESGNAGMVSSGIHSVSTKPSSYGTRRSLAGSMLQKPTQFSRPSFMFSPEARDNWRESHDLSSHLWEQIQRMKKA.

Residues 250-297 (SSNAKPKPHLSSKSSSQGNTLQRSTSSFSTPNRKVSQPSDFSASPSRS) form a disordered region. Residues 266-297 (QGNTLQRSTSSFSTPNRKVSQPSDFSASPSRS) show a composition bias toward polar residues. T279 bears the Phosphothreonine; by CDC2 mark. Phosphoserine; by CDC2 occurs at positions 293, 300, 551, 556, and 590. Disordered regions lie at residues 562-678 (VTPQ…SGGE) and 809-833 (ESGNAGMVSSGIHSVSTKPSSYGTR). Low complexity-rich tracts occupy residues 579-601 (SLTEESLSTRSSPTKPSTTSLRS) and 609-640 (ASSTLKAPSSSSKGVSNAASSKQSFPSSPSIS). Position 649 is a phosphoserine (S649). At T650 the chain carries Phosphothreonine. Positions 819-832 (GIHSVSTKPSSYGT) are enriched in polar residues.

Its subcellular location is the cytoplasm. The protein resides in the cytoskeleton. It is found in the microtubule organizing center. It localises to the spindle pole body. The protein localises to the spindle. Its function is as follows. Has a role in sister chromatid separation. The polypeptide is Phosphoprotein p93 (dis1) (Schizosaccharomyces pombe (strain 972 / ATCC 24843) (Fission yeast)).